A 123-amino-acid polypeptide reads, in one-letter code: Small ribosomal subunit protein uS12 (123 aa).

Asp-89 is subject to 3-methylthioaspartic acid.

It belongs to the universal ribosomal protein uS12 family. Part of the 30S ribosomal subunit. Contacts proteins S8 and S17. May interact with IF1 in the 30S initiation complex.

Functionally, with S4 and S5 plays an important role in translational accuracy. In terms of biological role, interacts with and stabilizes bases of the 16S rRNA that are involved in tRNA selection in the A site and with the mRNA backbone. Located at the interface of the 30S and 50S subunits, it traverses the body of the 30S subunit contacting proteins on the other side and probably holding the rRNA structure together. The combined cluster of proteins S8, S12 and S17 appears to hold together the shoulder and platform of the 30S subunit. In Methylobacterium sp. (strain 4-46), this protein is Small ribosomal subunit protein uS12.